We begin with the raw amino-acid sequence, 592 residues long: AT-rich interactive domain-containing protein 5A (592 aa).

Positions 1–53 (MAPPVKGKRKQSEEGEPLDPPVSPQPDGEPRSRSPVRLEEPPEAGREREEEQE) are disordered. The tract at residues 1 to 299 (MAPPVKGKRK…AAPPLESPQS (299 aa)) is interaction with SOX9. The residue at position 23 (S23) is a Phosphoserine. Residues 28-49 (GEPRSRSPVRLEEPPEAGRERE) show a composition bias toward basic and acidic residues. An ARID domain is found at 52-144 (QEEEQAFLVS…LVLPYVRHLK (93 aa)). Residues K82 and K91 each participate in a glycyl lysine isopeptide (Lys-Gly) (interchain with G-Cter in ubiquitin) cross-link. Residues 143 to 225 (LKGEDDKPLP…RGPAAGPSLP (83 aa)) form a disordered region. Over residues 162 to 186 (MAKEPRGDDGATERPKKVKEEKRVD) the composition is skewed to basic and acidic residues. S253 is subject to Phosphoserine. The tract at residues 277–333 (CRHGAGGEPQAPPAAPPLESPQSPGGPAEDSRHRLTPLEGRQAPGGGLWGETQAGPR) is disordered. Residues 286–295 (QAPPAAPPLE) are compositionally biased toward pro residues. Phosphoserine occurs at positions 438 and 463.

Interacts with SOX9. Interacts with ESR1. Interacts with RORC. Post-translationally, phosphorylated by MAPK14 on serine residues involving a TLR4 signaling pathway upon lipopolysaccharide (LPS) stimulation leading to its ubiquitination and proteasomal degradation. Ubiquitinated leading to proteasomal degradation; involving WWP1 linked to MAPK14-mediated phosphorylation upon LPS stimulation.

The protein localises to the nucleus. Functionally, DNA-binding protein that may regulate transcription and act as a repressor by binding to AT-rich stretches in the promoter region of target genes. May act as repressor and down-regulate enhancer-dependent gene expressison. May positively regulate chondrocyte-specific transcription such as of COL2A1 in collaboration with SOX9 and positively regulate histone H3 acetylation at chondrocyte-specific genes. May stimulate early-stage chondrocyte differentiation and inhibit later stage differention. Can repress ESR1-mediated transcriptional activation; proposed to act as corepressor for selective nuclear hormone receptors. As an RNA-binding protein, involved in the regulation of inflammatory response by stabilizing selective inflammation-related mRNAs, such as STAT3 and TBX21. Also stabilizes IL6 mRNA. Binds to stem loop structures located in the 3'UTRs of IL6, STAT3 and TBX21 mRNAs; at least for STAT3 prevents binding of ZC3H12A to the mRNA stem loop structure thus inhibiting its degradation activity. Contributes to elevated IL6 levels possibly implicated in autoimmunity processes. IL6-dependent stabilization of STAT3 mRNA may promote differentiation of naive CD4+ T-cells into T-helper Th17 cells. In CD4+ T-cells may also inhibit RORC-induced Th17 cell differentiation independently of IL6 signaling. Stabilization of TBX21 mRNA contributes to elevated interferon-gamma secretion in Th1 cells possibly implicated in the establishment of septic shock. Stabilizes TNFRSF4/OX40 mRNA by binding to the conserved stem loop structure in its 3'UTR; thereby competing with the mRNA-destabilizing functions of RC3H1 and endoribonuclease ZC3H12A. This chain is AT-rich interactive domain-containing protein 5A (ARID5A), found in Bos taurus (Bovine).